The following is a 298-amino-acid chain: Small ribosomal subunit protein uS2 (298 aa).

The protein belongs to the universal ribosomal protein uS2 family.

This chain is Small ribosomal subunit protein uS2, found in Leifsonia xyli subsp. xyli (strain CTCB07).